A 195-amino-acid polypeptide reads, in one-letter code: Adenylate kinase (195 aa).

Position 8–16 (8–16 (GIPGVGKTT)) interacts with ATP.

This sequence belongs to the archaeal adenylate kinase family. In terms of assembly, homotrimer.

It localises to the cytoplasm. The catalysed reaction is AMP + ATP = 2 ADP. This chain is Adenylate kinase (adkA), found in Saccharolobus solfataricus (strain ATCC 35092 / DSM 1617 / JCM 11322 / P2) (Sulfolobus solfataricus).